We begin with the raw amino-acid sequence, 292 residues long: Nanos homolog 1 (292 aa).

Disordered stretches follow at residues 1–41 and 68–121; these read MEAF…QPFS and GGNG…SRGR. The segment at 40–56 is essential for its translational repressor activity; that stretch reads FSSWNDYLGLATLITKA. Residues 76–87 are compositionally biased toward low complexity; the sequence is PPSSSSSSCCSP. Over residues 104-115 the composition is skewed to acidic residues; sequence DYDEDDDDDSDE. The Nanos-type zinc finger occupies 213–267; that stretch reads VCVFCRNNKEAMALYTTHILKGPDGRVLCPVLRRYTCPLCGASGDNAHTIKYCPL. Zn(2+) is bound by residues Cys-214, Cys-217, His-230, Cys-241, Cys-249, Cys-252, His-260, and Cys-265. 2 short sequence motifs (C2HC) span residues 214–241 and 249–265; these read CVFC…RVLC and CPLC…IKYC. The tract at residues 268 to 292 is disordered; sequence SKVPPPPARPPPRSARDGPPGKKLR. Over residues 269–280 the composition is skewed to pro residues; the sequence is KVPPPPARPPPR. A compositionally biased stretch (basic and acidic residues) spans 281-292; sequence SARDGPPGKKLR.

Belongs to the nanos family. As to quaternary structure, interacts with PUM2, SNAPIN and CTNNB1. Interacts (via N-terminal region) with CTNND1. Interacts with DDX20 (via N-terminal region). In terms of tissue distribution, testis and ovary (at protein level). Predominantly expressed in testis. Specifically expressed during germline development. In adult tissues, it is mainly expressed in spermatogonia, the stem cells of the germline. Also expressed during meiosis in spermatocytes. Not present in late, post-meiotic stage germ cells. Expressed in fetal ovaries, while it is weakly or not expressed in mature postmeiotic oocytes, suggesting that it may be expressed in premeiotic female germ cells. Expressed at high levels only in the E-cadherin deficient cell lines. Highly expressed in lung carcinomas and mostly detected in invasive tumor cells and its expression correlates with tumor aggressiveness.

The protein localises to the cytoplasm. The protein resides in the perinuclear region. In terms of biological role, may act as a translational repressor which regulates translation of specific mRNAs by forming a complex with PUM2 that associates with the 3'-UTR of mRNA targets. Capable of interfering with the proadhesive and anti-invasive functions of E-cadherin. Up-regulates the production of MMP14 to promote tumor cell invasion. The sequence is that of Nanos homolog 1 (NANOS1) from Homo sapiens (Human).